The primary structure comprises 262 residues: Small ribosomal subunit protein eS4 (262 aa).

One can recognise an S4 RNA-binding domain in the interval 42–104; the sequence is LPLLIFLRNR…TGEFFRLIYD (63 aa).

This sequence belongs to the eukaryotic ribosomal protein eS4 family.

The chain is Small ribosomal subunit protein eS4 (RpS4) from Lysiphlebus testaceipes (Greenbugs aphid parastoid).